The following is a 1202-amino-acid chain: Phospholipid-transporting ATPase 10 (1202 aa).

Residues 1-73 (MAGPSRRRRR…STKYTVASFF (73 aa)) lie on the Cytoplasmic side of the membrane. Residues 74-95 (PKSLFEQFRRVANFYFLVTGIL) form a helical membrane-spanning segment. The Extracellular segment spans residues 96–99 (SLTD). Residues 100-122 (LSPYGAVSALLPLALVISATMVK) traverse the membrane as a helical segment. At 123-305 (EGIEDWRRKQ…SRIERTMDKI (183 aa)) the chain is on the cytoplasmic side. The helical transmembrane segment at 306 to 327 (IYLMFGLVFLMSFVGSIIFGVE) threads the bilayer. The Extracellular portion of the chain corresponds to 328–364 (TREDKVKNGRTERWYLKPDDADIFFDPERAPMAAIYH). Residues 365-382 (FFTATMLYSYFIPISLYV) traverse the membrane as a helical segment. At 383–920 (SIEIVKVLQS…HGHWCYSRIA (538 aa)) the chain is on the cytoplasmic side. Asp-430 serves as the catalytic 4-aspartylphosphate intermediate. Positions 865 and 869 each coordinate Mg(2+). Residues 921–940 (SMICYFFYKNITFGVTVFLY) traverse the membrane as a helical segment. Topologically, residues 941–954 (EAYTSFSGQPAYND) are extracellular. Residues 955 to 974 (WFLSLFNVFFSSLPVIALGV) traverse the membrane as a helical segment. Over 975–1004 (FDQDVSARFCYKFPLLYQEGVQNILFSWKR) the chain is Cytoplasmic. Residues 1005–1027 (IIGWMFNGFISALAIFFLCKESL) traverse the membrane as a helical segment. Residues 1028 to 1040 (KHQLFDPDGKTAG) are Extracellular-facing. The chain crosses the membrane as a helical span at residues 1041-1063 (REILGGTMYTCVVWVVNLQMALS). The Cytoplasmic portion of the chain corresponds to 1064 to 1069 (ISYFTW). The chain crosses the membrane as a helical span at residues 1070–1090 (VQHIVIWGSIAFWYIFLMIYG). Residues 1091–1107 (AMTPSFSTDAYMVFLEA) are Extracellular-facing. The chain crosses the membrane as a helical span at residues 1108-1132 (LAPAPSYWLTTLFVMIFALIPYFVY). At 1133-1202 (KSVQMRFFPK…DQIYKDLVGV (70 aa)) the chain is on the cytoplasmic side.

Belongs to the cation transport ATPase (P-type) (TC 3.A.3) family. Type IV subfamily.

The protein resides in the cell membrane. The catalysed reaction is ATP + H2O + phospholipidSide 1 = ADP + phosphate + phospholipidSide 2.. Involved in transport of phospholipids. The chain is Phospholipid-transporting ATPase 10 from Arabidopsis thaliana (Mouse-ear cress).